The sequence spans 380 residues: Crotonobetainyl-CoA reductase (380 aa).

It belongs to the acyl-CoA dehydrogenase family. In terms of assembly, homotetramer. The cofactor is FAD.

The protein localises to the cytoplasm. It catalyses the reaction 4-(trimethylamino)butanoyl-CoA + oxidized [electron-transfer flavoprotein] + H(+) = crotonobetainyl-CoA + reduced [electron-transfer flavoprotein]. Its pathway is amine and polyamine metabolism; carnitine metabolism. Functionally, catalyzes the reduction of crotonobetainyl-CoA to gamma-butyrobetainyl-CoA. This Proteus sp. (strain LE138) protein is Crotonobetainyl-CoA reductase.